Reading from the N-terminus, the 455-residue chain is MRFAFDEIEETIRMVQAEKLDIRTITMGINLRDCVSDNVETLSNKIYDKITKKAKNLVKVANDLESEFGIPIVNKRISVTPIALISESAKSTEDFIKIAKALDAAAKEVGVNFIGGYSALVHKGFTDGDLRLINSIPEALSSTERVCSSINVATTKAGINMDAVALMGKIIKKTAELTKDKDGIGAAKLVVFCNAPGDNPFMAGAFHGVGEGECVINVGVSGPGVILAALSKLDNKADFGQISEIIKKTSFKIARAGELIGRLAAERLNTSFGILDLSLAPTPEIGDSIANILEAMGLSKCGAPGTTAALALLNDAVKKGGVMASSYVGGLSGAFIPVSEDAGMISAVEAGALSIEKLEAMTCVCSVGLDMIAIPGDTPAETISAIIADEMAIGMINKKTTAVRIIPVPGKKEGDHVEFGGLLGHAPVMKVNNFSADTFIKRGGRIPAPLQSLNN.

The protein belongs to the UPF0210 family. Homodimer.

This is UPF0210 protein Teth514_2074 from Thermoanaerobacter sp. (strain X514).